A 723-amino-acid chain; its full sequence is Methionine--tRNA ligase (723 aa).

A 'HIGH' region motif is present at residues 12–22 (PYANGDIHLGH). Cys143, Cys146, Cys156, and Cys159 together coordinate Zn(2+). The short motif at 345–349 (KMSKS) is the 'KMSKS' region element. Lys348 is an ATP binding site. The tract at residues 568–604 (PAAATAPAKDAKPAKEAGSQQRHAEKQQHAAGVSETA) is disordered. The 112-residue stretch at 612–723 (DFTKVDLRIA…EGAQAGMRVK (112 aa)) folds into the tRNA-binding domain.

The protein belongs to the class-I aminoacyl-tRNA synthetase family. MetG type 1 subfamily. In terms of assembly, homodimer. Requires Zn(2+) as cofactor.

Its subcellular location is the cytoplasm. It catalyses the reaction tRNA(Met) + L-methionine + ATP = L-methionyl-tRNA(Met) + AMP + diphosphate. Is required not only for elongation of protein synthesis but also for the initiation of all mRNA translation through initiator tRNA(fMet) aminoacylation. The sequence is that of Methionine--tRNA ligase from Azoarcus sp. (strain BH72).